Reading from the N-terminus, the 485-residue chain is Adenylate kinase 8 (485 aa).

Adenylate kinase regions lie at residues 58–258 (PRVF…TFVL) and 269–472 (PRIL…YTVS). 67-72 (ASGKHT) contacts ATP. The segment at 87–113 (TPESVLSSDVSLLAKEAQSYRDKGQEV) is NMP 1. Residues 140-143 (GFPK) and glutamine 147 each bind AMP. An LID 1 region spans residues 177–206 (GKRIDTANGEVYHTTFDWPSDPTVQRNLVE). Arginine 218 serves as a coordination point for AMP. 278 to 283 (GSGRSL) contacts ATP. Residues 298–327 (CCGQVLKEAVADQTKLGEVIQPYIENDQQV) form an NMP 2 region. Residues 325–327 (QQV), 354–357 (GFPR), and glutamine 361 contribute to the AMP site. The segment at 391-424 (LCMTDPVSGERYHDIYKPAPSSEVHERLQQNPRH) is LID 2. Arginine 432 contacts AMP.

The protein belongs to the adenylate kinase family.

Its subcellular location is the cytoplasm. It is found in the cytosol. The enzyme catalyses AMP + ATP = 2 ADP. It catalyses the reaction a 2'-deoxyribonucleoside 5'-diphosphate + ATP = a 2'-deoxyribonucleoside 5'-triphosphate + ADP. It carries out the reaction a ribonucleoside 5'-diphosphate + ATP = a ribonucleoside 5'-triphosphate + ADP. Nucleoside monophosphate (NMP) kinase that catalyzes the reversible transfer of the terminal phosphate group between nucleoside triphosphates and monophosphates. Has highest activity toward AMP, and weaker activity toward dAMP, CMP and dCMP. Also displays broad nucleoside diphosphate kinase activity. This is Adenylate kinase 8 (ak8) from Xenopus tropicalis (Western clawed frog).